The primary structure comprises 131 residues: Fumarate reductase subunit C (131 aa).

Helical transmembrane passes span 30–50 (EGTA…LFAL), 63–83 (FLQN…ALLH), and 109–129 (IIKS…FVAL).

This sequence belongs to the FrdC family. In terms of assembly, part of an enzyme complex containing four subunits: a flavoprotein (FrdA), an iron-sulfur protein (FrdB), and two hydrophobic anchor proteins (FrdC and FrdD).

Its subcellular location is the cell inner membrane. Its function is as follows. Two distinct, membrane-bound, FAD-containing enzymes are responsible for the catalysis of fumarate and succinate interconversion; fumarate reductase is used in anaerobic growth, and succinate dehydrogenase is used in aerobic growth. Anchors the catalytic components of the fumarate reductase complex to the cell inner membrane, binds quinones. The polypeptide is Fumarate reductase subunit C (Shigella dysenteriae serotype 1 (strain Sd197)).